Here is a 317-residue protein sequence, read N- to C-terminus: Protein KlaC (317 aa).

Functionally, belongs to the kla operon, which is associated with cryptic tellurite resistance, and IncW plasmid fertility inhibition. The chain is Protein KlaC (klaC) from Escherichia coli.